Reading from the N-terminus, the 335-residue chain is Glycerol-3-phosphate dehydrogenase [NAD(P)+] (335 aa).

NADPH-binding residues include serine 15, tyrosine 16, arginine 36, and lysine 110. Lysine 110, glycine 139, and threonine 141 together coordinate sn-glycerol 3-phosphate. Position 143 (alanine 143) interacts with NADPH. Sn-glycerol 3-phosphate contacts are provided by lysine 195, aspartate 248, serine 258, arginine 259, and asparagine 260. The active-site Proton acceptor is lysine 195. Arginine 259 contributes to the NADPH binding site. NADPH is bound by residues valine 283 and glutamate 285.

This sequence belongs to the NAD-dependent glycerol-3-phosphate dehydrogenase family.

The protein localises to the cytoplasm. It carries out the reaction sn-glycerol 3-phosphate + NAD(+) = dihydroxyacetone phosphate + NADH + H(+). The catalysed reaction is sn-glycerol 3-phosphate + NADP(+) = dihydroxyacetone phosphate + NADPH + H(+). Its pathway is membrane lipid metabolism; glycerophospholipid metabolism. In terms of biological role, catalyzes the reduction of the glycolytic intermediate dihydroxyacetone phosphate (DHAP) to sn-glycerol 3-phosphate (G3P), the key precursor for phospholipid synthesis. The protein is Glycerol-3-phosphate dehydrogenase [NAD(P)+] of Pseudoalteromonas translucida (strain TAC 125).